A 256-amino-acid polypeptide reads, in one-letter code: Pimeloyl-[acyl-carrier protein] methyl ester esterase (256 aa).

An AB hydrolase-1 domain is found at 15-242 (HLVLLHGWGL…AAHAPFISHP (228 aa)). Residues W22, 82 to 83 (SL), and 143 to 147 (FLALQ) each bind substrate. S82 serves as the catalytic Nucleophile. Active-site residues include D207 and H235. A substrate-binding site is contributed by H235.

This sequence belongs to the AB hydrolase superfamily. Carboxylesterase BioH family. In terms of assembly, monomer.

It is found in the cytoplasm. The catalysed reaction is 6-carboxyhexanoyl-[ACP] methyl ester + H2O = 6-carboxyhexanoyl-[ACP] + methanol + H(+). Its pathway is cofactor biosynthesis; biotin biosynthesis. Its function is as follows. The physiological role of BioH is to remove the methyl group introduced by BioC when the pimeloyl moiety is complete. It allows to synthesize pimeloyl-ACP via the fatty acid synthetic pathway through the hydrolysis of the ester bonds of pimeloyl-ACP esters. The protein is Pimeloyl-[acyl-carrier protein] methyl ester esterase of Salmonella agona (strain SL483).